The chain runs to 507 residues: Hippocampus abundant transcript-like protein 1 (507 aa).

A disordered region spans residues 1 to 22; it reads MSTDGESPEEPGWKAVASPKAS. Over 1–51 the chain is Extracellular; the sequence is MSTDGESPEEPGWKAVASPKASAMPEKRGSAQAASSSWLQGFGQPSVYHAA. Residues 52-72 traverse the membrane as a helical segment; it reads FVIFFEFFAWGLLTTPMLTVL. At 73 to 84 the chain is on the cytoplasmic side; that stretch reads HETFPQHTFLMN. Residues 85–105 traverse the membrane as a helical segment; sequence GLIQGVKGLLSFLSAPLIGAL. Topologically, residues 106–113 are extracellular; it reads SDVWGRKP. Residues 114–134 traverse the membrane as a helical segment; sequence FLLGTVFFTCFPIPLMRISPW. Residues 135-136 are Cytoplasmic-facing; the sequence is WY. Residues 137–157 form a helical membrane-spanning segment; sequence FGMISVSGVFSVTFSVIFAYV. Over 158-170 the chain is Extracellular; the sequence is ADFTQEHERSTAY. The helical transmembrane segment at 171–191 threads the bilayer; sequence GWVSATFAASLVSSPAIGTYL. At 192–198 the chain is on the cytoplasmic side; the sequence is SSNYGDS. The chain crosses the membrane as a helical span at residues 199 to 219; that stretch reads LVVLVATVVALLDICFILVAV. The Extracellular segment spans residues 220–257; it reads PESLPEKIRPASWGAQISWKQADPFASLKKVGKDSTVL. The helical transmembrane segment at 258 to 278 threads the bilayer; that stretch reads LICITVFLSYLPEAGQYSSFF. The Cytoplasmic segment spans residues 279–283; it reads LYLRQ. The chain crosses the membrane as a helical span at residues 284–304; it reads VIGFGSVKIVAFIAMVGILSI. The Extracellular segment spans residues 305–323; it reads LAQTVFLSKLMRSLGNKNT. A helical membrane pass occupies residues 324 to 344; sequence VLLGLGFQILQLAWYGFGAQA. Topologically, residues 345-347 are cytoplasmic; the sequence is WMM. Residues 348–368 form a helical membrane-spanning segment; that stretch reads WAAGTVAAMSSITFPAVSALI. The Extracellular segment spans residues 369–389; the sequence is SRNAESDQQGVAQGIITGIRG. Residues 390-410 traverse the membrane as a helical segment; sequence LCNGLGPALYGFIFYLFHVEL. The Cytoplasmic portion of the chain corresponds to 411 to 430; the sequence is NELGPKLDSDNDPLQGAFIP. Residues 431 to 451 traverse the membrane as a helical segment; that stretch reads GPPFLFGACIVLMSFLVALFI. Topologically, residues 452–507 are extracellular; sequence PEYRKTGGVQKHNNSISGSLSTPPERGSDEDIEPLLQDSNIWELSSEEPGNQCTEL. Over residues 462–473 the composition is skewed to polar residues; it reads KHNNSISGSLST. Positions 462 to 483 are disordered; it reads KHNNSISGSLSTPPERGSDEDI. N-linked (GlcNAc...) asparagine glycosylation occurs at asparagine 464.

Belongs to the major facilitator superfamily.

It localises to the membrane. The polypeptide is Hippocampus abundant transcript-like protein 1 (Rattus norvegicus (Rat)).